The chain runs to 406 residues: Cysteine desulfurase (406 aa).

Lys-226 carries the post-translational modification N6-(pyridoxal phosphate)lysine. Cys-364 acts as the Cysteine persulfide intermediate in catalysis.

Belongs to the class-V pyridoxal-phosphate-dependent aminotransferase family. Csd subfamily. As to quaternary structure, homodimer. Interacts with SufE and the SufBCD complex composed of SufB, SufC and SufD. The interaction with SufE is required to mediate the direct transfer of the sulfur atom from the S-sulfanylcysteine. Pyridoxal 5'-phosphate serves as cofactor.

The protein resides in the cytoplasm. The catalysed reaction is (sulfur carrier)-H + L-cysteine = (sulfur carrier)-SH + L-alanine. It catalyses the reaction L-selenocysteine + AH2 = hydrogenselenide + L-alanine + A + H(+). It participates in cofactor biosynthesis; iron-sulfur cluster biosynthesis. In terms of biological role, cysteine desulfurases mobilize the sulfur from L-cysteine to yield L-alanine, an essential step in sulfur metabolism for biosynthesis of a variety of sulfur-containing biomolecules. Component of the suf operon, which is activated and required under specific conditions such as oxidative stress and iron limitation. Acts as a potent selenocysteine lyase in vitro, that mobilizes selenium from L-selenocysteine. Selenocysteine lyase activity is however unsure in vivo. This chain is Cysteine desulfurase, found in Salmonella choleraesuis (strain SC-B67).